The chain runs to 145 residues: Methyl-coenzyme M reductase I operon protein D (145 aa).

In terms of assembly, MCR is composed of three subunits: alpha, beta, and gamma. The function of proteins C and D is not known.

This is Methyl-coenzyme M reductase I operon protein D (mcrD) from Methanothermobacter thermautotrophicus (strain ATCC 29096 / DSM 1053 / JCM 10044 / NBRC 100330 / Delta H) (Methanobacterium thermoautotrophicum).